The sequence spans 188 residues: Succinate-acetate/proton symporter SatP (188 aa).

Residues 1 to 13 are Cytoplasmic-facing; it reads MGNTKLANPAPLG. A helical membrane pass occupies residues 14-34; the sequence is LMGFGMTTILLNLHNVGYFAL. A topological domain (periplasmic) is located at residue Asp-35. Residues 36–56 form a helical membrane-spanning segment; the sequence is GIILAMGIFYGGIAQIFAGLL. Residues 57-63 are Cytoplasmic-facing; that stretch reads EYKKGNT. The chain crosses the membrane as a helical span at residues 64 to 84; it reads FGLTAFTSYGSFWLTLVAILL. Topologically, residues 85 to 97 are periplasmic; it reads MPKLGLTDAPNAQ. A helical transmembrane segment spans residues 98–118; it reads FLGVYLGLWGVFTLFMFFGTL. The Cytoplasmic portion of the chain corresponds to 119 to 122; the sequence is KGAR. The chain crosses the membrane as a helical span at residues 123–143; sequence VLQFVFFSLTVLFALLAIGNI. Residues 144 to 148 lie on the Periplasmic side of the membrane; that stretch reads AGNAA. Residues 149-169 form a helical membrane-spanning segment; that stretch reads IIHFAGWIGLICGASAIYLAM. Residues 170–188 lie on the Cytoplasmic side of the membrane; it reads GEVLNEQFGRTVLPIGESH.

Belongs to the acetate uptake transporter (AceTr) (TC 2.A.96) family.

It is found in the cell inner membrane. In terms of biological role, uptake of acetate and succinate. Transport is energetically dependent on the protonmotive force. This chain is Succinate-acetate/proton symporter SatP (satP), found in Escherichia coli O157:H7.